We begin with the raw amino-acid sequence, 435 residues long: Proline--tRNA ligase (435 aa).

It belongs to the class-II aminoacyl-tRNA synthetase family. ProS type 2 subfamily. In terms of assembly, homodimer.

The protein localises to the cytoplasm. The enzyme catalyses tRNA(Pro) + L-proline + ATP = L-prolyl-tRNA(Pro) + AMP + diphosphate. Functionally, catalyzes the attachment of proline to tRNA(Pro) in a two-step reaction: proline is first activated by ATP to form Pro-AMP and then transferred to the acceptor end of tRNA(Pro). The protein is Proline--tRNA ligase of Rhodospirillum rubrum (strain ATCC 11170 / ATH 1.1.1 / DSM 467 / LMG 4362 / NCIMB 8255 / S1).